The sequence spans 643 residues: Chromosomal replication initiator protein DnaA (643 aa).

The interval 1-97 is domain I, interacts with DnaA modulators; it reads MADVPADLAA…VDDSAGEPPP (97 aa). Residues 87–303 form a disordered region; it reads TVDDSAGEPP…ASGPGEPTAR (217 aa). Residues 97–302 are domain II; that stretch reads PAAPPAQQTP…PASGPGEPTA (206 aa). Residues 195 to 209 are compositionally biased toward polar residues; the sequence is SPSSQDAYGSPSQDY. Positions 222–269 are enriched in basic and acidic residues; sequence QRGDYDTPRAEYEPARPDYDSARPDYESARPEYDQRDPVRRELPEPPA. The span at 291 to 300 shows a compositional bias: low complexity; it reads PAPASGPGEP. Positions 303 to 519 are domain III, AAA+ region; sequence RLNPKYLFDT…GALIRVTAFA (217 aa). ATP is bound by residues Gly347, Gly349, Lys350, and Thr351. Residues 520-643 form a domain IV, binds dsDNA region; sequence SLNRQPVDLG…TELTNRIKNG (124 aa).

The protein belongs to the DnaA family. As to quaternary structure, oligomerizes as a right-handed, spiral filament on DNA at oriC.

It is found in the cytoplasm. Plays an essential role in the initiation and regulation of chromosomal replication. ATP-DnaA binds to the origin of replication (oriC) to initiate formation of the DNA replication initiation complex once per cell cycle. Binds the DnaA box (a 9 base pair repeat at the origin) and separates the double-stranded (ds)DNA. Forms a right-handed helical filament on oriC DNA; dsDNA binds to the exterior of the filament while single-stranded (ss)DNA is stabiized in the filament's interior. The ATP-DnaA-oriC complex binds and stabilizes one strand of the AT-rich DNA unwinding element (DUE), permitting loading of DNA polymerase. After initiation quickly degrades to an ADP-DnaA complex that is not apt for DNA replication. Binds acidic phospholipids. This chain is Chromosomal replication initiator protein DnaA, found in Streptomyces reticuli.